The sequence spans 325 residues: S-adenosylmethionine carrier 1, chloroplastic/mitochondrial (325 aa).

The transit peptide at 1 to 38 directs the protein to the chloroplast and mitochondrion; sequence MAPLTLSVDVKSSSATSHDVSKRVMQSSQLKINKGFFA. 3 Solcar repeats span residues 52-124, 133-215, and 228-310; these read RTLF…TKQK, LSAV…LCLG, and ENAL…TKRT. A run of 5 helical transmembrane segments spans residues 55-75, 97-117, 132-152, 230-250, and 285-305; these read FEGF…LYPI, YSGL…FVGV, HLSA…ASLI, ALIG…LDVI, and GIGP…GVLE.

It belongs to the mitochondrial carrier (TC 2.A.29) family. In terms of tissue distribution, expressed in seedlings, cotyledons, leaves and flowers. Lower levels of expression in stems and roots. Not detected in senescent leaves, petals and pollen grains.

The protein localises to the mitochondrion membrane. Its subcellular location is the plastid. The protein resides in the chloroplast membrane. Inhibited strongly by tannic acid, bromocresol purple, mercuric chloride, mersalyl, p-hydroxymercuribenzoate, S-adenosylhomocysteine, S-adenosylcysteine and adenosylornithine, and to a lesser extent by N-ethylmaleimide, bathophenanthroline and pyridoxal-5'-P. Transporter involved in exchange reactions through membranes. Has a low uniporter activity. Specifically mediates the transport of S-adenosylmethionine (SAM) and its closest analogs. Probably involved in the uptake of SAM in exchange for S-adenosylhomocysteine (SAHC), which is produced from SAM in the mitochondrial matrix and plastidial stroma by methyltransferase activities. In Arabidopsis thaliana (Mouse-ear cress), this protein is S-adenosylmethionine carrier 1, chloroplastic/mitochondrial (SAMC1).